A 1396-amino-acid polypeptide reads, in one-letter code: DNA-directed RNA polymerase subunit beta' (1396 aa).

Positions 72, 74, 87, and 90 each coordinate Zn(2+). 3 residues coordinate Mg(2+): D463, D465, and D467. 4 residues coordinate Zn(2+): C814, C889, C896, and C899.

This sequence belongs to the RNA polymerase beta' chain family. The RNAP catalytic core consists of 2 alpha, 1 beta, 1 beta' and 1 omega subunit. When a sigma factor is associated with the core the holoenzyme is formed, which can initiate transcription. Mg(2+) is required as a cofactor. The cofactor is Zn(2+).

The catalysed reaction is RNA(n) + a ribonucleoside 5'-triphosphate = RNA(n+1) + diphosphate. DNA-dependent RNA polymerase catalyzes the transcription of DNA into RNA using the four ribonucleoside triphosphates as substrates. The polypeptide is DNA-directed RNA polymerase subunit beta' (Chlamydia trachomatis serovar L2b (strain UCH-1/proctitis)).